The sequence spans 598 residues: Nuclear receptor subfamily 4 group A member 2 (598 aa).

A disordered region spans residues 1–22 (MPCVQAQYGSSPQGASPASQSY). Positions 8-22 (YGSSPQGASPASQSY) are enriched in low complexity. A DNA-binding region (nuclear receptor) is located at residues 260–335 (EGLCAVCGDN…VGMVKEVVRT (76 aa)). 2 NR C4-type zinc fingers span residues 263–283 (CAVC…CEGC) and 299–323 (CLAN…FQKC). The short motif at 287 to 314 (FKRTVQKNAKYVCLANKNCPVDKRRRNR) is the Bipartite nuclear localization signal (NLS1) element. The segment at 337-361 (SLKGRRGRLPSKPKSPQDPSPPSPP) is disordered. The Nuclear localization signal (NLS1) motif lies at 338-350 (LKGRRGRLPSKPK). The segment covering 352-361 (PQDPSPPSPP) has biased composition (pro residues). The NR LBD domain maps to 360–595 (PPVSLISALV…AIIDKLFLDT (236 aa)). The short motif at 443 to 452 (FLELFVLRLA) is the nuclear export sequence (NES1) element. The nuclear export sequence (NES2) motif lies at 568–577 (QGLQRIFYLK).

Belongs to the nuclear hormone receptor family. NR4 subfamily. As to quaternary structure, interacts with SFPQ, NCOR2, SIN3A and HADC1. The interaction with NCOR2 increases in the absence of PITX3. Interacts with PER2. As to expression, shows a ubiquitous distribution in the cerebral cortex, hippocampus, thalamus, amygdala, and midbrain. Expression increases in prenatally stressed adult offspring in the ventral tegmental area, whereas no changes are observed in the substantia nigra area (at protein level). Not expressed in quiescent liver but is rapidly induced following partial hepatectomy and is specific to hepatic growth as it is not induced in other mitogen-treated cells. Expressed at very low levels in the lung, spleen and stomach and at high levels in the brain.

It localises to the cytoplasm. It is found in the nucleus. In terms of biological role, transcriptional regulator which is important for the differentiation and maintenance of meso-diencephalic dopaminergic (mdDA) neurons during development. It is crucial for expression of a set of genes such as SLC6A3, SLC18A2, TH and DRD2 which are essential for development of mdDA neurons. May confer liver-specific regulation of delayed-early genes induced later in the G1 phase of regeneration along with NR4A1. The sequence is that of Nuclear receptor subfamily 4 group A member 2 (Nr4a2) from Rattus norvegicus (Rat).